A 444-amino-acid polypeptide reads, in one-letter code: Cytokine receptor-like factor 3 (444 aa).

Positions 1–65 form a coiled coil; it reads MSIEAEALLQ…QELQTAVSRL (65 aa). The Fibronectin type-III domain occupies 177–270; it reads PPVQIEELVE…PQTGYTTLAP (94 aa).

It belongs to the cytokine receptor-like factor 3 family.

It is found in the cytoplasm. Its function is as follows. May play a role in the negative regulation of cell cycle progression. This chain is Cytokine receptor-like factor 3 (crlf3), found in Danio rerio (Zebrafish).